A 346-amino-acid chain; its full sequence is Dihydroorotase (346 aa).

Zn(2+)-binding residues include His13 and His15. Residues 15-17 (HLR) and Asn41 contribute to the substrate site. Zn(2+) contacts are provided by Lys99, His136, and His174. Lys99 carries the N6-carboxylysine modification. Residue His136 participates in substrate binding. Leu219 lines the substrate pocket. Asp247 provides a ligand contact to Zn(2+). Asp247 is a catalytic residue. Substrate contacts are provided by His251 and Ala263.

It belongs to the metallo-dependent hydrolases superfamily. DHOase family. Class II DHOase subfamily. Homodimer. Requires Zn(2+) as cofactor.

The enzyme catalyses (S)-dihydroorotate + H2O = N-carbamoyl-L-aspartate + H(+). It functions in the pathway pyrimidine metabolism; UMP biosynthesis via de novo pathway; (S)-dihydroorotate from bicarbonate: step 3/3. Catalyzes the reversible cyclization of carbamoyl aspartate to dihydroorotate. In Chelativorans sp. (strain BNC1), this protein is Dihydroorotase.